The following is a 471-amino-acid chain: MKIKTRFAPSPTGYLHVGGARTALYSWLFARNHGGEFVLRIEDTDLERSTPEAIEAIMDGMNWLSLEWDEGPYYQTKRFDRYNAVIDQMLEEGTAYKCYCSKERLEALREEQMAKGEKPRYDGRCRHSHEHHADDEPCVVRFANPQEGSVVFDDQIRGPIEFSNQELDDLIIRRTDGSPTYNFCVVVDDWDMEITHVIRGEDHINNTPRQINILKALKAPVPVYAHVSMINGDDGKKLSKRHGAVSVMQYRDDGYLPEALLNYLVRLGWSHGDQEIFTREEMIKYFTLNAVSKSASAFNTDKLLWLNHHYINALPPEYVATHLQWHIEQENIDTRNGPQLADLVKLLGERCKTLKEMAQSCRYFYEDFAEFDADAAKKHLRPVARQPLEVVRDKLAAITDWTAENVHHAIQATADELEVGMGKVGMPLRVAVTGAGRSPALDVTVHAIGKTRSIERINKALDFIAERENQQ.

Positions 9–19 (PSPTGYLHVGG) match the 'HIGH' region motif. Positions 98, 100, 125, and 127 each coordinate Zn(2+). Positions 237–241 (KLSKR) match the 'KMSKS' region motif. Lys-240 contacts ATP.

It belongs to the class-I aminoacyl-tRNA synthetase family. Glutamate--tRNA ligase type 1 subfamily. In terms of assembly, monomer. Zn(2+) is required as a cofactor.

Its subcellular location is the cytoplasm. The enzyme catalyses tRNA(Glu) + L-glutamate + ATP = L-glutamyl-tRNA(Glu) + AMP + diphosphate. Catalyzes the attachment of glutamate to tRNA(Glu) in a two-step reaction: glutamate is first activated by ATP to form Glu-AMP and then transferred to the acceptor end of tRNA(Glu). This Shigella sonnei (strain Ss046) protein is Glutamate--tRNA ligase.